The chain runs to 484 residues: Tubulin-like protein TubZ (484 aa).

Position 32–33 (32–33 (QK)) interacts with GTP. A Mg(2+)-binding site is contributed by D64. GTP is bound by residues 140 to 142 (GVG), N213, K237, and N241. The required to bind TubR-DNA complex stretch occupies residues 408–484 (RKQDEEKVDI…LKTSNPFKKR (77 aa)). The tract at residues 428-484 (TFNPYNKNQGFGGASRFSGGKNSAFKRQTSEATSTQNQQEEENIISTLKTSNPFKKR) is disordered. Residues 452-484 (FKRQTSEATSTQNQQEEENIISTLKTSNPFKKR) show a composition bias toward polar residues.

It belongs to the FtsZ family. TubZ subfamily. In terms of assembly, forms filaments; a 2-stranded filament forms with the non-hydrolyzable GTP-gamma-S which is probably a precursor to the 4-stranded filament that forms in the presence of GTP. The 4-stranded form binds GDP. In vivo polymerizes to form dynamic filaments that often extend from one cell pole to the other, moving in a unidirectional manner. Filaments polymerize at the plus end and depolymerize at the minus end, a process called treadmilling. Polymerization only occurs above a critical concentration, it does not require upstream tubR. The tubC DNA-TubR complex binds to TubZ. Requires Mg(2+) as cofactor.

It localises to the cytoplasm. It catalyses the reaction GTP + H2O = GDP + phosphate + H(+). With respect to regulation, GTPase is inhibited by GTP-gamma-S, which also stabilizes filaments. A tubulin-like, filament forming GTPase; the motor component of the type III plasmid partition system which ensures correct segregation of the pBtoxis plasmid. Filaments may seed from the centromere-like site (tubC) when bound by DNA-binding protein TubR; the tubC-TubR complex stabilizes the TubZ filament. Filaments grow at the plus end and depolymerize at the minus end, a process called treadmilling. TubR-tubC complexes track the depolymerizing minus end of the filament, probably pulling plasmid within the cell. Required for pBtoxis plasmid replication/partition. Binds the TubR-tubC complex; GTP is not required for binding to TubR-tubC. TubZ alone does not bind DNA. Has a high GTPase activity in the presence of Mg(2+); in the presence of GTP assembles into dynamic filaments which upon polymerization bind almost exclusively GDP. Filament formation is cooperative, requiring a critical concentration. Formation occurs very quickly and is followed by disassembly as GTP is consumed. The protein is Tubulin-like protein TubZ of Bacillus thuringiensis subsp. israelensis.